Reading from the N-terminus, the 297-residue chain is Protease HtpX homolog (297 aa).

2 helical membrane passes run V14–L34 and Y39–F59. H143 provides a ligand contact to Zn(2+). The active site involves E144. H147 contacts Zn(2+). 2 helical membrane-spanning segments follow: residues I158–W178 and G193–A213. Residue E225 coordinates Zn(2+).

Belongs to the peptidase M48B family. It depends on Zn(2+) as a cofactor.

The protein localises to the cell membrane. The polypeptide is Protease HtpX homolog (Streptococcus equi subsp. zooepidemicus (strain MGCS10565)).